Here is a 255-residue protein sequence, read N- to C-terminus: Polycomb group RING finger protein 5 (255 aa).

The segment at 18–57 adopts an RING-type zinc-finger fold; the sequence is CYICKGYLIKPTTVTECLHTFCKTCIVQHFEDSNDCPRCG. Positions 97-132 are disordered; that stretch reads WKKNKPQENGQDDMSKVDKPKVDEEGDENQDDKDYH. The span at 109–119 shows a compositional bias: basic and acidic residues; that stretch reads DMSKVDKPKVD.

Component of a PRC1-like complex that contains PCGF5, RNF2 and UBE2D3. Interacts with RNF2; the interaction is direct. Interacts with CBX6, CBX7 and CBX8. Interacts with AUTS2; the interaction is direct. Identified in a complex that contains AUTS2, PCGF5, CSNK2B and RNF2.

Its subcellular location is the nucleus. It is found in the nucleoplasm. Component of a Polycomb group (PcG) multiprotein PRC1-like complex, a complex class required to maintain the transcriptionally repressive state of many genes, including Hox genes, throughout development. PcG PRC1 complex acts via chromatin remodeling and modification of histones; it mediates monoubiquitination of histone H2A 'Lys-119', rendering chromatin heritably changed in its expressibility. Within the PRC1-like complex, regulates RNF2 ubiquitin ligase activity. Plays a redundant role with PCGF3 as part of a PRC1-like complex that mediates monoubiquitination of histone H2A 'Lys-119' on the X chromosome and is required for normal silencing of one copy of the X chromosome in XX females. This Bos taurus (Bovine) protein is Polycomb group RING finger protein 5 (PCGF5).